The chain runs to 465 residues: MELRGRRVCVTGLGVSGPPVARALLKHGAHVTVVEGRDDDVNRERARTLRELGATVELGEPTTLPAGTDLVVTSPGWRPDAPVLVAAADAGVEVIGDVELAWRLRPAGQVWLAVTGTNGKTTTVRMLEAMLRADGRRALAVGNVGTPVIDAALADGPDRWDILAVELSSFQLHWSATVQPHAAAIINLAPDHLDWHGGMEPYAAAKAKVYGAGTIRIVNAADPALRELAETHGDPAAPLVGFSLDVPRAGELGLVEDLLVDRAFVANPRTEATELATLADVTPRAPHNVANALAAAALARSIGVAPEAVRTGLRNFQPEPHRIAHVATIDGVDYVDDSKATNAHAAAASLAAYPSVVWIAGGLLKGADVTGLVRQAASRLRGVVLLGADRHQLREALDTHAPHVPVVDVARTDEGAMAEVVAAAARLAQKGDTVLLAPAAASMDMFTNYIERGEAFAREVRALAG.

An ATP-binding site is contributed by 116-122 (GTNGKTT).

The protein belongs to the MurCDEF family.

The protein localises to the cytoplasm. It catalyses the reaction UDP-N-acetyl-alpha-D-muramoyl-L-alanine + D-glutamate + ATP = UDP-N-acetyl-alpha-D-muramoyl-L-alanyl-D-glutamate + ADP + phosphate + H(+). Its pathway is cell wall biogenesis; peptidoglycan biosynthesis. Functionally, cell wall formation. Catalyzes the addition of glutamate to the nucleotide precursor UDP-N-acetylmuramoyl-L-alanine (UMA). This is UDP-N-acetylmuramoylalanine--D-glutamate ligase from Thermobifida fusca (strain YX).